A 50-amino-acid chain; its full sequence is Small ribosomal subunit protein uS14 (50 aa).

Residues cysteine 15, cysteine 18, cysteine 33, and cysteine 36 each coordinate Zn(2+).

This sequence belongs to the universal ribosomal protein uS14 family. Zinc-binding uS14 subfamily. Part of the 30S ribosomal subunit. The cofactor is Zn(2+).

In terms of biological role, binds 16S rRNA, required for the assembly of 30S particles. In Methanosarcina mazei (strain ATCC BAA-159 / DSM 3647 / Goe1 / Go1 / JCM 11833 / OCM 88) (Methanosarcina frisia), this protein is Small ribosomal subunit protein uS14.